The following is a 259-amino-acid chain: Ribose-5-phosphate isomerase (259 aa).

Belongs to the ribose 5-phosphate isomerase family.

The protein resides in the cytoplasm. It catalyses the reaction aldehydo-D-ribose 5-phosphate = D-ribulose 5-phosphate. Its pathway is carbohydrate degradation; pentose phosphate pathway; D-ribose 5-phosphate from D-ribulose 5-phosphate (non-oxidative stage): step 1/1. The chain is Ribose-5-phosphate isomerase (RKI1) from Vanderwaltozyma polyspora (strain ATCC 22028 / DSM 70294 / BCRC 21397 / CBS 2163 / NBRC 10782 / NRRL Y-8283 / UCD 57-17) (Kluyveromyces polysporus).